The primary structure comprises 293 residues: Ribonuclease HIII (293 aa).

An RNase H type-2 domain is found at 78–293 (LPLIGTDEVG…TEKAKKRLER (216 aa)). Residues D84, E85, and D187 each coordinate a divalent metal cation.

Belongs to the RNase HII family. RnhC subfamily. Mn(2+) serves as cofactor. It depends on Mg(2+) as a cofactor.

It is found in the cytoplasm. The enzyme catalyses Endonucleolytic cleavage to 5'-phosphomonoester.. Functionally, endonuclease that specifically degrades the RNA of RNA-DNA hybrids. The chain is Ribonuclease HIII (rnhC) from Streptococcus pneumoniae serotype 4 (strain ATCC BAA-334 / TIGR4).